The following is a 685-amino-acid chain: Probable transketolase (685 aa).

Substrate is bound at residue His-32. Thiamine diphosphate is bound by residues His-72 and 121–123; that span reads GPL. A Mg(2+)-binding site is contributed by Asp-162. 2 residues coordinate thiamine diphosphate: Gly-163 and Asn-192. Mg(2+)-binding residues include Asn-192 and Ile-194. His-268, Arg-363, and Ser-390 together coordinate substrate. Residue His-268 coordinates thiamine diphosphate. 2 residues coordinate thiamine diphosphate: Glu-422 and Phe-448. Glu-422 serves as the catalytic Proton donor. His-472, Asp-480, and Arg-531 together coordinate substrate.

It belongs to the transketolase family. As to quaternary structure, homodimer. It depends on Mg(2+) as a cofactor. Ca(2+) is required as a cofactor. Requires Mn(2+) as cofactor. Co(2+) serves as cofactor. The cofactor is thiamine diphosphate.

The enzyme catalyses D-sedoheptulose 7-phosphate + D-glyceraldehyde 3-phosphate = aldehydo-D-ribose 5-phosphate + D-xylulose 5-phosphate. Functionally, catalyzes the transfer of a two-carbon ketol group from a ketose donor to an aldose acceptor, via a covalent intermediate with the cofactor thiamine pyrophosphate. This is Probable transketolase from Schizosaccharomyces pombe (strain 972 / ATCC 24843) (Fission yeast).